The sequence spans 406 residues: Histidine--tRNA ligase (406 aa).

This sequence belongs to the class-II aminoacyl-tRNA synthetase family. As to quaternary structure, homodimer.

It localises to the cytoplasm. The enzyme catalyses tRNA(His) + L-histidine + ATP = L-histidyl-tRNA(His) + AMP + diphosphate + H(+). The polypeptide is Histidine--tRNA ligase (Nitratiruptor sp. (strain SB155-2)).